A 174-amino-acid chain; its full sequence is UPF0340 protein SE_1711 (174 aa).

The protein belongs to the UPF0340 family.

The sequence is that of UPF0340 protein SE_1711 from Staphylococcus epidermidis (strain ATCC 12228 / FDA PCI 1200).